The following is a 146-amino-acid chain: Hemoglobin subunit beta-1 (146 aa).

A Globin domain is found at 2-146 (HWTAEEKHLL…VAHALARRYH (145 aa)). Heme b-binding residues include histidine 63 and histidine 92.

This sequence belongs to the globin family. There are three forms of hemoglobin in Sphenodon: A, A' and D. Hb A is a tetramer of two alpha-A and two beta-1, Hb A' is a tetramer of two alpha-a and two beta-2, Hb D is a tetramer of two alpha-D and two beta-2.

In terms of biological role, involved in oxygen transport from the lung to the various peripheral tissues. This Sphenodon punctatus (Tuatara) protein is Hemoglobin subunit beta-1 (HBB1).